The sequence spans 227 residues: Cytochrome c oxidase subunit 2 (227 aa).

At 1–14 (MAHAAQVGLQDATS) the chain is on the mitochondrial intermembrane side. Residues 15-45 (PIMEELVIFHDHALMIIFLICFLVLYALFLT) traverse the membrane as a helical segment. Residues 46–59 (LTTKLTNTSISDAQ) lie on the Mitochondrial matrix side of the membrane. Residues 60-87 (EMETIWTILPAIILILIALPSLRILYLT) traverse the membrane as a helical segment. Residues 88-227 (DEINDPSFTI…IFEMGPVFTL (140 aa)) are Mitochondrial intermembrane-facing. Residues His-161, Cys-196, Glu-198, Cys-200, His-204, and Met-207 each coordinate Cu cation. Glu-198 lines the Mg(2+) pocket.

Belongs to the cytochrome c oxidase subunit 2 family. As to quaternary structure, component of the cytochrome c oxidase (complex IV, CIV), a multisubunit enzyme composed of 14 subunits. The complex is composed of a catalytic core of 3 subunits MT-CO1, MT-CO2 and MT-CO3, encoded in the mitochondrial DNA, and 11 supernumerary subunits COX4I, COX5A, COX5B, COX6A, COX6B, COX6C, COX7A, COX7B, COX7C, COX8 and NDUFA4, which are encoded in the nuclear genome. The complex exists as a monomer or a dimer and forms supercomplexes (SCs) in the inner mitochondrial membrane with NADH-ubiquinone oxidoreductase (complex I, CI) and ubiquinol-cytochrome c oxidoreductase (cytochrome b-c1 complex, complex III, CIII), resulting in different assemblies (supercomplex SCI(1)III(2)IV(1) and megacomplex MCI(2)III(2)IV(2)). Found in a complex with TMEM177, COA6, COX18, COX20, SCO1 and SCO2. Interacts with TMEM177 in a COX20-dependent manner. Interacts with COX20. Interacts with COX16. Cu cation is required as a cofactor.

Its subcellular location is the mitochondrion inner membrane. It catalyses the reaction 4 Fe(II)-[cytochrome c] + O2 + 8 H(+)(in) = 4 Fe(III)-[cytochrome c] + 2 H2O + 4 H(+)(out). Its function is as follows. Component of the cytochrome c oxidase, the last enzyme in the mitochondrial electron transport chain which drives oxidative phosphorylation. The respiratory chain contains 3 multisubunit complexes succinate dehydrogenase (complex II, CII), ubiquinol-cytochrome c oxidoreductase (cytochrome b-c1 complex, complex III, CIII) and cytochrome c oxidase (complex IV, CIV), that cooperate to transfer electrons derived from NADH and succinate to molecular oxygen, creating an electrochemical gradient over the inner membrane that drives transmembrane transport and the ATP synthase. Cytochrome c oxidase is the component of the respiratory chain that catalyzes the reduction of oxygen to water. Electrons originating from reduced cytochrome c in the intermembrane space (IMS) are transferred via the dinuclear copper A center (CU(A)) of subunit 2 and heme A of subunit 1 to the active site in subunit 1, a binuclear center (BNC) formed by heme A3 and copper B (CU(B)). The BNC reduces molecular oxygen to 2 water molecules using 4 electrons from cytochrome c in the IMS and 4 protons from the mitochondrial matrix. This is Cytochrome c oxidase subunit 2 (MT-CO2) from Pongo abelii (Sumatran orangutan).